Consider the following 242-residue polypeptide: Myogenic factor 6 (242 aa).

A disordered region spans residues 31–63; sequence SPLYPGSDGTLSPCQDQMPPEAGSDSSGEEHVL. Residues 93-144 enclose the bHLH domain; sequence DRRKAATLRERRRLKKINEAFEALKRRTVANPNQRLPKVEILRSAINYIERL.

In terms of assembly, efficient DNA binding requires dimerization with another bHLH protein. Interacts with CSRP3.

Its subcellular location is the nucleus. In terms of biological role, involved in muscle differentiation (myogenic factor). Induces fibroblasts to differentiate into myoblasts. Probable sequence specific DNA-binding protein. The sequence is that of Myogenic factor 6 (MYF6) from Bos taurus (Bovine).